A 638-amino-acid chain; its full sequence is Threonine--tRNA ligase (638 aa).

Residues M1–T61 form the TGS domain. The catalytic stretch occupies residues D242–P533. 3 residues coordinate Zn(2+): C333, H384, and H510.

This sequence belongs to the class-II aminoacyl-tRNA synthetase family. As to quaternary structure, homodimer. It depends on Zn(2+) as a cofactor.

The protein resides in the cytoplasm. The catalysed reaction is tRNA(Thr) + L-threonine + ATP = L-threonyl-tRNA(Thr) + AMP + diphosphate + H(+). Functionally, catalyzes the attachment of threonine to tRNA(Thr) in a two-step reaction: L-threonine is first activated by ATP to form Thr-AMP and then transferred to the acceptor end of tRNA(Thr). Also edits incorrectly charged L-seryl-tRNA(Thr). The sequence is that of Threonine--tRNA ligase from Prochlorococcus marinus (strain AS9601).